The following is a 338-amino-acid chain: MSTLRLLISDSYDPWFNLAVEECIFRQMPATQRVLFLWRNADTVVIGRAQNPWKECNTRRMEEDNVRLARRSSGGGAVFHDLGNTCFTFMAGKPEYDKTISTSIVLNALNALGVSAEASGRNDLVVKTAEGDRKVSGSAYRETKDRGFHHGTLLLNADLSRLANYLNPDKKKLAAKGITSVRSRVTNLTELLPGIPHEQVCEAITEAFFAHYGERVEAEIISPDKTPDLPNFAETFARQSSWEWNFGQAPAFSHLLDERFSWGGVELHFDVEKGHITRAQVFTDSLNPAPLEALAGRLQGCLYRADMLQQECEALLVDFPDQEKELRELSTWIAGAVR.

In terms of domain architecture, BPL/LPL catalytic spans 29–216 (PATQRVLFLW…AFFAHYGERV (188 aa)). ATP contacts are provided by residues Arg71, 76-79 (GAVF), and Lys134. Residue Lys134 participates in (R)-lipoate binding.

This sequence belongs to the LplA family. In terms of assembly, monomer.

It is found in the cytoplasm. The enzyme catalyses L-lysyl-[lipoyl-carrier protein] + (R)-lipoate + ATP = N(6)-[(R)-lipoyl]-L-lysyl-[lipoyl-carrier protein] + AMP + diphosphate + H(+). It functions in the pathway protein modification; protein lipoylation via exogenous pathway; protein N(6)-(lipoyl)lysine from lipoate: step 1/2. Its pathway is protein modification; protein lipoylation via exogenous pathway; protein N(6)-(lipoyl)lysine from lipoate: step 2/2. Catalyzes both the ATP-dependent activation of exogenously supplied lipoate to lipoyl-AMP and the transfer of the activated lipoyl onto the lipoyl domains of lipoate-dependent enzymes. This is Lipoate-protein ligase A from Escherichia coli O157:H7.